The sequence spans 45 residues: Large ribosomal subunit protein bL34 (45 aa).

The protein belongs to the bacterial ribosomal protein bL34 family.

In Streptomyces avermitilis (strain ATCC 31267 / DSM 46492 / JCM 5070 / NBRC 14893 / NCIMB 12804 / NRRL 8165 / MA-4680), this protein is Large ribosomal subunit protein bL34.